The sequence spans 303 residues: T-box protein 38 (303 aa).

The T-box DNA-binding region spans 14 to 195; it reads LSTPEIWEEF…HNKFASGFRS (182 aa). The segment at 193 to 225 is disordered; that stretch reads FRSNGKRRLSSDSENSENSPPKRSKLVTPPTIS. A compositionally biased stretch (low complexity) spans 204 to 213; that stretch reads DSENSENSPP.

The protein resides in the nucleus. Transcription factor. Required for mesodermal induction, acting redundantly with transcription factor tbx-37. Together with tbx-37, acts by inducing cell fates in the AB lineage, thereby playing a role in development of the anterior pharynx. The polypeptide is T-box protein 38 (tbx-38) (Caenorhabditis elegans).